A 368-amino-acid chain; its full sequence is ATP-dependent (S)-NAD(P)H-hydrate dehydratase (368 aa).

In terms of domain architecture, YjeF C-terminal spans Ser3–Leu359. (6S)-NADPHX-binding positions include Gly120 and Asn173 to Arg179. Residues Lys217–Asp221 and Gly236–Gly245 contribute to the ATP site. Asp246 contributes to the (6S)-NADPHX binding site.

Belongs to the NnrD/CARKD family. Requires Mg(2+) as cofactor.

It is found in the cytoplasm. It carries out the reaction (6S)-NADHX + ATP = ADP + phosphate + NADH + H(+). The enzyme catalyses (6S)-NADPHX + ATP = ADP + phosphate + NADPH + H(+). Catalyzes the dehydration of the S-form of NAD(P)HX at the expense of ATP, which is converted to ADP. Together with NAD(P)HX epimerase, which catalyzes the epimerization of the S- and R-forms, the enzyme allows the repair of both epimers of NAD(P)HX, a damaged form of NAD(P)H that is a result of enzymatic or heat-dependent hydration. The protein is ATP-dependent (S)-NAD(P)H-hydrate dehydratase of Ajellomyces capsulatus (strain G186AR / H82 / ATCC MYA-2454 / RMSCC 2432) (Darling's disease fungus).